The primary structure comprises 552 residues: MKGCLATMDKELWIERANDSLVKHFYEQQSDIEQREGFESKLTFGTAGIRGKFGLGEGRLNKFTIEKLALGLARYLNAQTNSPTIVIHYDIRHLSTEFAQIIANVLANHQITVYLPDTYKTTPELSFAVRNLNTTAGIMITASHNPKDYNGIKVYGSDGAQLSTDASELASRYIEEVGDPLQIDIPISKQNTSYIKPFPKSVTDDYMKHIQNMIGYIPKSDLQVVFTSLHGTSVPIVPELLQSLNFNQFNLVEAQCKPDPNFSSVQSANPEDHRAFDQAVELANKSHADLLISTDPDADRLGIAERDAHGHITYFNGNQIGALLLNYRIQQTSQLRHRLMIQSIVSSELTKSLARYNNVEYKEVLTGFKFIAQEIRQLDDHQNMIFAFEESYGFLSEPFVRDKDAVQIVPLIIKYASELKLYGKTLKDELEQIYQTVGRHEDTLFSHTLEGFEGKKKINAIMTKFRSNPPQEIQGLKVKAIEDYLTSEVYHLDKDTTSQINSPKSNVIRVLFDEGFIALRPSGTEPKIKLYVSLKCPNFDDVAQKINAMIFS.

Ser-143 (phosphoserine intermediate) is an active-site residue. Residues Ser-143, Asp-295, Asp-297, and Asp-299 each coordinate Mg(2+).

It belongs to the phosphohexose mutase family. Requires Mg(2+) as cofactor.

It carries out the reaction alpha-D-glucose 1-phosphate = alpha-D-glucose 6-phosphate. It functions in the pathway glycolipid metabolism; diglucosyl-diacylglycerol biosynthesis. In terms of biological role, catalyzes the interconversion between glucose-6-phosphate and alpha-glucose-1-phosphate. This is the first step in the biosynthesis of diglucosyl-diacylglycerol (Glc2-DAG), i.e. the predominant glycolipid found in the S.aureus membrane, which is also used as a membrane anchor for lipoteichoic acid (LTA). This chain is Phosphoglucomutase (pgcA), found in Staphylococcus aureus (strain USA300).